The sequence spans 136 residues: Mitochondrial pyruvate carrier 1-like protein (136 aa).

The Mitochondrial matrix portion of the chain corresponds to 2 to 19; the sequence is ARMAVLWRKMRDNFQSKE. The helical transmembrane segment at 20-42 threads the bilayer; it reads FREYVSSTHFWGPAFSWGLPLAA. Topologically, residues 43-51 are mother cell cytoplasmic; the sequence is FKDMKASPE. A helical membrane pass occupies residues 52 to 74; sequence IISGRMTTALILYSAIFMRFAYR. Residues 75 to 136 are Mitochondrial matrix-facing; that stretch reads VQPRNLLLMA…PGSQPPKQAS (62 aa). Residues 111–136 form a disordered region; that stretch reads EAKARDPPATAAAATSPGSQPPKQAS. The span at 117-136 shows a compositional bias: low complexity; sequence PPATAAAATSPGSQPPKQAS.

Belongs to the mitochondrial pyruvate carrier (MPC) (TC 2.A.105) family.

The protein resides in the mitochondrion inner membrane. It carries out the reaction pyruvate(out) + H(+)(out) = pyruvate(in) + H(+)(in). Its function is as follows. Mediates the uptake of pyruvate into mitochondria. This chain is Mitochondrial pyruvate carrier 1-like protein (MPC1L), found in Homo sapiens (Human).